Here is a 424-residue protein sequence, read N- to C-terminus: Testican-2 (424 aa).

Positions 1–22 (MRAPGCGRLVLPLLLLAAAALA) are cleaved as a signal peptide. S72 carries the post-translational modification Phosphoserine; by FAM20C. Cystine bridges form between C90/C101, C95/C111, C136/C166, C139/C159, and C148/C180. The Kazal-like domain maps to 130-182 (GNKDSICKPCHMAQLASVCGSDGHTYSSVCKLEQQACLSSKQLAVRCEGPCPC). Residue N225 is glycosylated (N-linked (GlcNAc...) asparagine). The Thyroglobulin type-1 domain maps to 310–376 (KPPCLAELER…GTRTHGSPDC (67 aa)). 3 cysteine pairs are disulfide-bonded: C313–C337, C348–C355, and C357–C376. Residues S383 and S388 are each glycosylated (O-linked (Xyl...) (glycosaminoglycan) serine). The disordered stretch occupies residues 387–424 (GSGVGWEDEEEKETEEAGEEAEEEEGEAGEADDGGYIW). Residues 392 to 424 (WEDEEEKETEEAGEEAEEEEGEAGEADDGGYIW) show a composition bias toward acidic residues.

Contains chondroitin sulfate and heparan sulfate O-linked oligosaccharides. As to expression, highly expressed in brain. Also found in lung and testis.

The protein localises to the secreted. The protein resides in the extracellular space. It localises to the extracellular matrix. Functionally, may participate in diverse steps of neurogenesis. Binds calcium. The protein is Testican-2 (SPOCK2) of Homo sapiens (Human).